Consider the following 262-residue polypeptide: Glycoprotein gp2 (262 aa).

Residues 1 to 45 are disordered; it reads RRGSPQGGSHTTPHPDRLTPSPDDTYDDDTNHPNGRNNSIEIVPQ.

The protein localises to the virion membrane. In terms of biological role, virulence factor. This is Glycoprotein gp2 from Equus caballus (Horse).